A 130-amino-acid polypeptide reads, in one-letter code: Histone H2A type 2-B (130 aa).

Residues 1-22 (MSGRGKQGGKARAKAKSRSSRA) form a disordered region. Residue Ser2 is modified to N-acetylserine. Phosphoserine; by RPS6KA5 is present on Ser2. Position 4 is a citrulline; alternate (Arg4). Position 4 is a symmetric dimethylarginine; by PRMT5; alternate (Arg4). At Lys6 the chain carries N6-(2-hydroxyisobutyryl)lysine. The span at 7-19 (QGGKARAKAKSRS) shows a compositional bias: basic residues. Lys10 bears the N6-(2-hydroxyisobutyryl)lysine; alternate mark. 2 positions are modified to N6-(beta-hydroxybutyryl)lysine; alternate: Lys10 and Lys14. Residue Lys10 is modified to N6-lactoyllysine; alternate. At Lys10 the chain carries N6-succinyllysine; alternate. Lys14 is covalently cross-linked (Glycyl lysine isopeptide (Lys-Gly) (interchain with G-Cter in ubiquitin); alternate). A Glycyl lysine isopeptide (Lys-Gly) (interchain with G-Cter in ubiquitin) cross-link involves residue Lys16. An N6-(2-hydroxyisobutyryl)lysine; alternate modification is found at Lys37. Residue Lys37 is modified to N6-(beta-hydroxybutyryl)lysine; alternate. Lys37 carries the post-translational modification N6-crotonyllysine; alternate. N6-(2-hydroxyisobutyryl)lysine is present on residues Lys75 and Lys76. Position 96 is an N6-(2-hydroxyisobutyryl)lysine; alternate (Lys96). N6-(beta-hydroxybutyryl)lysine; alternate is present on Lys96. Residue Lys96 is modified to N6-succinyllysine; alternate. Lys96 is subject to N6-glutaryllysine; alternate. N5-methylglutamine is present on Gln105. Lys119 is modified (N6-(2-hydroxyisobutyryl)lysine; alternate). Lys119 is subject to N6-(beta-hydroxybutyryl)lysine; alternate. N6-crotonyllysine; alternate occurs at positions 119 and 120. 2 positions are modified to N6-glutaryllysine; alternate: Lys119 and Lys120. A Glycyl lysine isopeptide (Lys-Gly) (interchain with G-Cter in ubiquitin); alternate cross-link involves residue Lys120. Residue Thr121 is modified to Phosphothreonine; by DCAF1.

The protein belongs to the histone H2A family. The nucleosome is a histone octamer containing two molecules each of H2A, H2B, H3 and H4 assembled in one H3-H4 heterotetramer and two H2A-H2B heterodimers. The octamer wraps approximately 147 bp of DNA. Deiminated on Arg-4 in granulocytes upon calcium entry. Post-translationally, monoubiquitination of Lys-120 (H2AK119Ub) by RING1, TRIM37 and RNF2/RING2 complex gives a specific tag for epigenetic transcriptional repression and participates in X chromosome inactivation of female mammals. It is involved in the initiation of both imprinted and random X inactivation. Ubiquitinated H2A is enriched in inactive X chromosome chromatin. Ubiquitination of H2A functions downstream of methylation of 'Lys-27' of histone H3 (H3K27me). H2AK119Ub by RNF2/RING2 can also be induced by ultraviolet and may be involved in DNA repair. Monoubiquitination of Lys-120 (H2AK119Ub) by TRIM37 may promote transformation of cells in a number of breast cancers. Following DNA double-strand breaks (DSBs), it is ubiquitinated through 'Lys-63' linkage of ubiquitin moieties by the E2 ligase UBE2N and the E3 ligases RNF8 and RNF168, leading to the recruitment of repair proteins to sites of DNA damage. Ubiquitination at Lys-14 and Lys-16 (H2AK13Ub and H2AK15Ub, respectively) in response to DNA damage is initiated by RNF168 that mediates monoubiquitination at these 2 sites, and 'Lys-63'-linked ubiquitin are then conjugated to monoubiquitin; RNF8 is able to extend 'Lys-63'-linked ubiquitin chains in vitro. Deubiquitinated by USP51 at Lys-14 and Lys-16 (H2AK13Ub and H2AK15Ub, respectively) after damaged DNA is repaired. H2AK119Ub and ionizing radiation-induced 'Lys-63'-linked ubiquitination (H2AK13Ub and H2AK15Ub) are distinct events. In terms of processing, phosphorylation on Ser-2 (H2AS1ph) is enhanced during mitosis. Phosphorylation on Ser-2 by RPS6KA5/MSK1 directly represses transcription. Acetylation of H3 inhibits Ser-2 phosphorylation by RPS6KA5/MSK1. Phosphorylation at Thr-121 (H2AT120ph) by DCAF1 is present in the regulatory region of many tumor suppresor genes and down-regulates their transcription. Symmetric dimethylation on Arg-4 by the PRDM1/PRMT5 complex may play a crucial role in the germ-cell lineage. Post-translationally, glutamine methylation at Gln-105 (H2AQ104me) by FBL is specifically dedicated to polymerase I. It is present at 35S ribosomal DNA locus and impairs binding of the FACT complex. In terms of processing, crotonylation (Kcr) is specifically present in male germ cells and marks testis-specific genes in post-meiotic cells, including X-linked genes that escape sex chromosome inactivation in haploid cells. Crotonylation marks active promoters and enhancers and confers resistance to transcriptional repressors. It is also associated with post-meiotically activated genes on autosomes. Lactylated in macrophages by EP300/P300 by using lactoyl-CoA directly derived from endogenous or exogenous lactate, leading to stimulates gene transcription.

It localises to the nucleus. The protein localises to the chromosome. Its function is as follows. Core component of nucleosome. Nucleosomes wrap and compact DNA into chromatin, limiting DNA accessibility to the cellular machineries which require DNA as a template. Histones thereby play a central role in transcription regulation, DNA repair, DNA replication and chromosomal stability. DNA accessibility is regulated via a complex set of post-translational modifications of histones, also called histone code, and nucleosome remodeling. In Homo sapiens (Human), this protein is Histone H2A type 2-B.